The following is an 810-amino-acid chain: Leucine--tRNA ligase (810 aa).

The 'HIGH' region signature appears at 43–53 (PYPSGTLHIGH). A 'KMSKS' region motif is present at residues 578–582 (KMSKS). Lys581 provides a ligand contact to ATP.

Belongs to the class-I aminoacyl-tRNA synthetase family.

It localises to the cytoplasm. The catalysed reaction is tRNA(Leu) + L-leucine + ATP = L-leucyl-tRNA(Leu) + AMP + diphosphate. This is Leucine--tRNA ligase from Solibacter usitatus (strain Ellin6076).